Reading from the N-terminus, the 368-residue chain is 3-dehydroquinate synthase (368 aa).

Residues 69 to 74 (DGEAYK), 103 to 107 (GVIGD), 127 to 128 (TT), Lys140, and Lys149 contribute to the NAD(+) site. Residues Glu182, His245, and His262 each coordinate Zn(2+).

Belongs to the sugar phosphate cyclases superfamily. Dehydroquinate synthase family. Co(2+) is required as a cofactor. Requires Zn(2+) as cofactor. The cofactor is NAD(+).

The protein localises to the cytoplasm. It carries out the reaction 7-phospho-2-dehydro-3-deoxy-D-arabino-heptonate = 3-dehydroquinate + phosphate. The protein operates within metabolic intermediate biosynthesis; chorismate biosynthesis; chorismate from D-erythrose 4-phosphate and phosphoenolpyruvate: step 2/7. Its function is as follows. Catalyzes the conversion of 3-deoxy-D-arabino-heptulosonate 7-phosphate (DAHP) to dehydroquinate (DHQ). The sequence is that of 3-dehydroquinate synthase from Pseudomonas paraeruginosa (strain DSM 24068 / PA7) (Pseudomonas aeruginosa (strain PA7)).